The following is a 127-amino-acid chain: Small ribosomal subunit protein uS13 (127 aa).

Positions 97–127 (PVRGQRTRTNARTRRGGRKTVAGKKKAAAKK) are disordered. The span at 101–127 (QRTRTNARTRRGGRKTVAGKKKAAAKK) shows a compositional bias: basic residues.

It belongs to the universal ribosomal protein uS13 family. In terms of assembly, part of the 30S ribosomal subunit. Forms a loose heterodimer with protein S19. Forms two bridges to the 50S subunit in the 70S ribosome.

Located at the top of the head of the 30S subunit, it contacts several helices of the 16S rRNA. In the 70S ribosome it contacts the 23S rRNA (bridge B1a) and protein L5 of the 50S subunit (bridge B1b), connecting the 2 subunits; these bridges are implicated in subunit movement. Contacts the tRNAs in the A and P-sites. The chain is Small ribosomal subunit protein uS13 from Gloeobacter violaceus (strain ATCC 29082 / PCC 7421).